A 350-amino-acid chain; its full sequence is Glucose-6-phosphate 3-dehydrogenase (350 aa).

The protein belongs to the Gfo/Idh/MocA family.

The enzyme catalyses D-glucose 6-phosphate + NAD(+) = 3-dehydro-D-glucose 6-phosphate + NADH + H(+). The protein operates within antibiotic biosynthesis; kanosamine biosynthesis. In terms of biological role, involved in the biosynthesis of kanosamine (3-amino-3-deoxy-D-glucose), which is known to have antibiotic and antifungal properties, and to be a precursor of the antibiotic neotrehalosadiamine (3,3'-diamino-3,3'-dideoxy-alpha,beta-trehalose (NTD)). Catalyzes the oxidation of glucose 6-phosphate to 3-oxo-D-glucose 6-phosphate. It can only use NAD. The polypeptide is Glucose-6-phosphate 3-dehydrogenase (ntdC) (Bacillus subtilis (strain 168)).